A 237-amino-acid chain; its full sequence is Uridylate kinase (237 aa).

Residue 9 to 12 (KLSG) participates in ATP binding. Residues 17 to 22 (GTQGYG) form an involved in allosteric activation by GTP region. Residue G51 coordinates UMP. ATP is bound by residues G52 and R56. UMP contacts are provided by residues D71 and 132 to 139 (CGNPFFTT). T159, Y165, and D168 together coordinate ATP.

The protein belongs to the UMP kinase family. In terms of assembly, homohexamer.

Its subcellular location is the cytoplasm. It catalyses the reaction UMP + ATP = UDP + ADP. The protein operates within pyrimidine metabolism; CTP biosynthesis via de novo pathway; UDP from UMP (UMPK route): step 1/1. Allosterically activated by GTP. Inhibited by UTP. In terms of biological role, catalyzes the reversible phosphorylation of UMP to UDP. The protein is Uridylate kinase of Parasynechococcus marenigrum (strain WH8102).